Consider the following 224-residue polypeptide: Voltage-dependent calcium channel gamma-1 subunit (224 aa).

Residues 1-10 (MSQTKALKVR) are Cytoplasmic-facing. The helical transmembrane segment at 11 to 29 (VTLFCILVGIVLALVAVVT) threads the bilayer. The Extracellular segment spans residues 30–110 (DHWAVLSPHV…TQKEYSISAA (81 aa)). N-linked (GlcNAc...) asparagine glycans are attached at residues Asn-43 and Asn-81. Cys-57 and Cys-82 form a disulfide bridge. The helical transmembrane segment at 111–131 (AIAIFSLGFIILGTICGLLSF) threads the bilayer. Over 132 to 136 (RKKRD) the chain is Cytoplasmic. A helical transmembrane segment spans residues 137–157 (YLLRPASMFYAFAGLCIFVSV). Residues 158-181 (EVMRQSVKRMIDSEDTVWIDYYYG) lie on the Extracellular side of the membrane. A helical transmembrane segment spans residues 182 to 206 (WSFACACAAFILLFLGGIALLLFSL). Residues 207-224 (PRMPQYPWESCMDAEPEH) lie on the Cytoplasmic side of the membrane.

This sequence belongs to the PMP-22/EMP/MP20 family. CACNG subfamily. Component of a calcium channel complex consisting of a pore-forming alpha subunit (CACNA1S) and the ancillary subunits CACNB1 or CACNB2, CACNG1 and CACNA2D1. The channel complex contains alpha, beta, gamma and delta subunits in a 1:1:1:1 ratio, i.e. it contains either CACNB1 or CACNB2. Post-translationally, N-glycosylated.

The protein resides in the cell membrane. It is found in the sarcolemma. Regulatory subunit of the voltage-gated calcium channel that gives rise to L-type calcium currents in skeletal muscle. Regulates channel inactivation kinetics. This chain is Voltage-dependent calcium channel gamma-1 subunit (CACNG1), found in Sus scrofa (Pig).